The sequence spans 462 residues: tRNA modification GTPase MnmE (462 aa).

Positions 27, 89, and 128 each coordinate (6S)-5-formyl-5,6,7,8-tetrahydrofolate. A TrmE-type G domain is found at 224–383 (GLATAIVGRP…LEAQIAKLFF (160 aa)). K(+) is bound at residue asparagine 234. GTP-binding positions include 234-239 (NVGKSS), 253-259 (TDVAGTT), and 278-281 (DTAG). Serine 238 is a binding site for Mg(2+). Positions 253, 255, and 258 each coordinate K(+). Position 259 (threonine 259) interacts with Mg(2+). A (6S)-5-formyl-5,6,7,8-tetrahydrofolate-binding site is contributed by lysine 462.

This sequence belongs to the TRAFAC class TrmE-Era-EngA-EngB-Septin-like GTPase superfamily. TrmE GTPase family. In terms of assembly, homodimer. Heterotetramer of two MnmE and two MnmG subunits. The cofactor is K(+).

Its subcellular location is the cytoplasm. Exhibits a very high intrinsic GTPase hydrolysis rate. Involved in the addition of a carboxymethylaminomethyl (cmnm) group at the wobble position (U34) of certain tRNAs, forming tRNA-cmnm(5)s(2)U34. The polypeptide is tRNA modification GTPase MnmE (Latilactobacillus sakei subsp. sakei (strain 23K) (Lactobacillus sakei subsp. sakei)).